Reading from the N-terminus, the 304-residue chain is 33 kDa chaperonin (304 aa).

Cystine bridges form between C236–C238 and C269–C272.

Belongs to the HSP33 family. Post-translationally, under oxidizing conditions two disulfide bonds are formed involving the reactive cysteines. Under reducing conditions zinc is bound to the reactive cysteines and the protein is inactive.

The protein resides in the cytoplasm. Its function is as follows. Redox regulated molecular chaperone. Protects both thermally unfolding and oxidatively damaged proteins from irreversible aggregation. Plays an important role in the bacterial defense system toward oxidative stress. In Pelobacter propionicus (strain DSM 2379 / NBRC 103807 / OttBd1), this protein is 33 kDa chaperonin.